The chain runs to 149 residues: UPF0178 protein VV1_1847 (149 aa).

The protein belongs to the UPF0178 family.

The chain is UPF0178 protein VV1_1847 from Vibrio vulnificus (strain CMCP6).